Consider the following 90-residue polypeptide: MKEIIIWSAYLDAEKSRKEGRKIPKELCVNNPKIKDIYNSLRKLGYNAEIVKNKCHPKEWWEIVGYIKVKVNDDIPKLEILKKICENLKK.

The protein belongs to the SRP19 family. Part of the signal recognition particle protein translocation system, which is composed of SRP and FtsY. Archaeal SRP consists of a 7S RNA molecule of 300 nucleotides and two protein subunits: SRP54 and SRP19.

It localises to the cytoplasm. Functionally, involved in targeting and insertion of nascent membrane proteins into the cytoplasmic membrane. Binds directly to 7S RNA and mediates binding of the 54 kDa subunit of the SRP. The polypeptide is Signal recognition particle 19 kDa protein (Methanococcus aeolicus (strain ATCC BAA-1280 / DSM 17508 / OCM 812 / Nankai-3)).